We begin with the raw amino-acid sequence, 185 residues long: Ribosome-recycling factor (185 aa).

The protein belongs to the RRF family.

The protein resides in the cytoplasm. Functionally, responsible for the release of ribosomes from messenger RNA at the termination of protein biosynthesis. May increase the efficiency of translation by recycling ribosomes from one round of translation to another. The chain is Ribosome-recycling factor from Pseudomonas savastanoi pv. phaseolicola (strain 1448A / Race 6) (Pseudomonas syringae pv. phaseolicola (strain 1448A / Race 6)).